Reading from the N-terminus, the 358-residue chain is tRNA pseudouridine synthase D (358 aa).

Aspartate 84 acts as the Nucleophile in catalysis. One can recognise a TRUD domain in the interval 161 to 312 (GTPNYFGPQR…RRSLRLMVAD (152 aa)).

The protein belongs to the pseudouridine synthase TruD family.

It carries out the reaction uridine(13) in tRNA = pseudouridine(13) in tRNA. In terms of biological role, responsible for synthesis of pseudouridine from uracil-13 in transfer RNAs. The polypeptide is tRNA pseudouridine synthase D (Nitrosococcus oceani (strain ATCC 19707 / BCRC 17464 / JCM 30415 / NCIMB 11848 / C-107)).